The primary structure comprises 341 residues: Adenylosuccinate synthetase (341 aa).

GTP is bound by residues 12–18 (GDEGKGK) and 42–44 (GHS). The Proton acceptor role is filled by aspartate 13. 2 residues coordinate Mg(2+): aspartate 13 and glycine 42. IMP contacts are provided by residues 13–16 (DEGK), 40–43 (NAGH), threonine 127, arginine 141, glutamine 179, threonine 194, and arginine 256. Histidine 43 acts as the Proton donor in catalysis. 252 to 258 (VVTGRKR) contributes to the substrate binding site. GTP-binding positions include arginine 258, 284–286 (CID), and 324–326 (STG).

It belongs to the adenylosuccinate synthetase family. As to quaternary structure, homodimer. Requires Mg(2+) as cofactor.

It localises to the cytoplasm. The enzyme catalyses IMP + L-aspartate + GTP = N(6)-(1,2-dicarboxyethyl)-AMP + GDP + phosphate + 2 H(+). Its pathway is purine metabolism; AMP biosynthesis via de novo pathway; AMP from IMP: step 1/2. In terms of biological role, plays an important role in the de novo pathway of purine nucleotide biosynthesis. Catalyzes the first committed step in the biosynthesis of AMP from IMP. In Methanosphaera stadtmanae (strain ATCC 43021 / DSM 3091 / JCM 11832 / MCB-3), this protein is Adenylosuccinate synthetase.